Here is a 301-residue protein sequence, read N- to C-terminus: GTP cyclohydrolase FolE2 (301 aa).

Belongs to the GTP cyclohydrolase IV family.

The enzyme catalyses GTP + H2O = 7,8-dihydroneopterin 3'-triphosphate + formate + H(+). Its pathway is cofactor biosynthesis; 7,8-dihydroneopterin triphosphate biosynthesis; 7,8-dihydroneopterin triphosphate from GTP: step 1/1. Functionally, converts GTP to 7,8-dihydroneopterin triphosphate. The sequence is that of GTP cyclohydrolase FolE2 from Pseudomonas syringae pv. syringae (strain B728a).